The primary structure comprises 444 residues: Cell wall mannoprotein PST1 (444 aa).

The signal sequence occupies residues 1–19 (MQLHSLIASTALLITSALA). 15 N-linked (GlcNAc...) asparagine glycosylation sites follow: N57, N76, N83, N86, N196, N210, N228, N235, N242, N263, N268, N280, N292, N305, and N329. Low complexity-rich tracts occupy residues 359-381 (SVKL…SKSS) and 395-417 (KAAA…KSSK). The disordered stretch occupies residues 359-418 (SVKLSSTSKSQSSQTTAKVSKSSSKAEEKKFTSGDIKAAASASSVSSSSASSSSSKSSKG). A lipid anchor (GPI-anchor amidated asparagine) is attached at N419. Positions 420–444 (AAIMAPIGQTTPLVGLLTAIIMSIM) are cleaved as a propeptide — removed in mature form.

Belongs to the SPS2 family. In terms of processing, extensively N- and O-mannosylated.

The protein resides in the cell membrane. The protein localises to the secreted. It localises to the cell wall. Its function is as follows. Has a partially redundant function to ECM33 in cell wall integrity. May be involved in a repair mechanism activated in response to cell wall damage. This Saccharomyces cerevisiae (strain YJM789) (Baker's yeast) protein is Cell wall mannoprotein PST1 (PST1).